An 89-amino-acid chain; its full sequence is Huwentoxin-IV (89 aa).

An N-terminal signal peptide occupies residues 1–24 (MVNMKASMFLALAGLVLLFVVCYA). The propeptide occupies 25 to 52 (SESEEKEFSNELLSSVLAVDDNSKGEER). Residue Glu-53 is modified to Pyrrolidone carboxylic acid (Glu); partial. 3 disulfides stabilise this stretch: Cys-54-Cys-69, Cys-61-Cys-76, and Cys-68-Cys-83. At Ile-87 the chain carries Isoleucine amide.

The protein belongs to the neurotoxin 10 (Hwtx-1) family. 22 (Htx-4) subfamily. Post-translationally, two forms of huwentoxin-IV exist in the venom of H.schmidti, a non-N-terminally modified (HwTx-IV) and a naturally modified peptide with pyroglutamic acid residue at position 53 (mHwTx-IV). mHwTx-IV shows no observable difference with the unmodified toxin when applied to the TTX-S sodium channel of DRG neuron (IC(50)~50 nM) or when tested on hNav1.7/SCN9A (IC(50)=30.8 nM). In addition, similarly to the unmodified toxin, mHwTx-IV has only a weak affinity for lipid membranes. However, in contrast with HwTx-IV, which dissociates at moderate and high depolarization voltages (50-200 mV), mHwTx-IV inhibition of TTX-sensitive sodium channels is not reversed by strong depolarization voltages. Expressed by the venom gland.

Its subcellular location is the secreted. Its function is as follows. This lethal neurotoxin (without cyclization at position 53) inhibits neuronal voltage-gated sodium channel Nav1.2/SCN2A (IC(50)=10-150 nM), rNav1.3/SCN3A (IC(50)=338 nM), Nav1.6/SCN8A (IC(50)=117 nM), and hNav1.7/SCN9A (IC(50)=9.6-33 nM). It inhibits activation of sodium channel by trapping the voltage sensor of domain II (DIIS4) in the closed configuration. The toxin neither shifts the Nav1.7/SCN9A activation curve nor modifies the slope factor. It does not slow fast-inactivation of hNav1.7/SCN9A channels. In addition, it has only a weak affinity for lipid membranes. This toxin also exists with a pyroglutamate at position 53. The sole difference observed between modified (mHwTx-IV) and unmodified toxins is that moderate or high depolarization voltages (200 mV) permit the unmodified toxin to dissociate, whereas mHwTx-IV toxin does not dissociate, even at high depolarization voltages. These data indicate that mHwTx-IV strongly binds to voltage sensor of sodium channel even at extreme depolarization voltages. In Cyriopagopus schmidti (Chinese bird spider), this protein is Huwentoxin-IV.